The chain runs to 147 residues: Hemoglobin subunit beta (147 aa).

Residue valine 2 is modified to N-acetylvaline. One can recognise a Globin domain in the interval 3 to 147 (HLTGEEKSAV…VANALAHKYH (145 aa)). Threonine 13 bears the Phosphothreonine mark. A Phosphoserine modification is found at serine 45. Lysine 60 is modified (N6-acetyllysine). Histidine 64 is a heme b binding site. At lysine 83 the chain carries N6-acetyllysine. Histidine 93 is a heme b binding site. An S-nitrosocysteine modification is found at cysteine 94. Lysine 145 carries the post-translational modification N6-acetyllysine.

Belongs to the globin family. As to quaternary structure, heterotetramer of two alpha chains and two beta chains. As to expression, red blood cells.

In terms of biological role, involved in oxygen transport from the lung to the various peripheral tissues. The chain is Hemoglobin subunit beta (HBB) from Callithrix jacchus (White-tufted-ear marmoset).